The primary structure comprises 635 residues: Very-long-chain aldehyde decarbonylase GL1-6 (635 aa).

The next 4 membrane-spanning stretches (helical) occupy residues 46–66 (LLNFMVFPMLLLRLLYGQLWI), 100–120 (IILTALVFYLVSATMPQAQVA), 127–147 (GMVVTAVLHAGPVEFLYYWLH), and 183–203 (VVYFVLLAIPILSTVATGTVS). The region spanning 139-273 (VEFLYYWLHR…MPVYDYIYGT (135 aa)) is the Fatty acid hydroxylase domain.

The protein belongs to the sterol desaturase family. In terms of assembly, homodimer. As to expression, expressed in germinating seeds and shoots.

Its subcellular location is the endoplasmic reticulum membrane. It carries out the reaction a long-chain fatty aldehyde + 2 NADPH + O2 + H(+) = a long-chain alkane + formate + 2 NADP(+) + H2O. In terms of biological role, aldehyde decarbonylase involved in the conversion of aldehydes to alkanes. Core component of a very-long-chain alkane synthesis complex. This Oryza sativa subsp. japonica (Rice) protein is Very-long-chain aldehyde decarbonylase GL1-6.